Here is a 90-residue protein sequence, read N- to C-terminus: WAP four-disulfide core domain protein 12 (90 aa).

Positions 1 to 23 (MGSSSFLVLMVSLALVTLVAVEG) are cleaved as a signal peptide. In terms of domain architecture, WAP spans 27 to 74 (GIEKAGVCPADNVRCFKSDPPQCHTDQDCLGERKCCYLHCGFKCVIPV). Cystine bridges form between Cys34–Cys62, Cys41–Cys66, Cys49–Cys61, and Cys55–Cys70.

Its subcellular location is the secreted. Antibacterial protein. Putative acid-stable proteinase inhibitor. The chain is WAP four-disulfide core domain protein 12 (WFDC12) from Pongo abelii (Sumatran orangutan).